Reading from the N-terminus, the 184-residue chain is UPF0179 protein Pcal_2106 (184 aa).

Low complexity predominate over residues 146 to 161 (GASSAGISQAPSRVPL). The interval 146–184 (GASSAGISQAPSRVPLSKPPSKSPSPQKSSPRGPTSRLP) is disordered.

It belongs to the UPF0179 family.

This Pyrobaculum calidifontis (strain DSM 21063 / JCM 11548 / VA1) protein is UPF0179 protein Pcal_2106.